A 276-amino-acid chain; its full sequence is Thiazole synthase (276 aa).

Lys-117 acts as the Schiff-base intermediate with DXP in catalysis. Residues Gly-178, 204–205 (AG), and 226–227 (NT) each bind 1-deoxy-D-xylulose 5-phosphate.

The protein belongs to the ThiG family. As to quaternary structure, homotetramer. Forms heterodimers with either ThiH or ThiS.

The protein localises to the plastid. Its subcellular location is the chloroplast. It carries out the reaction [ThiS sulfur-carrier protein]-C-terminal-Gly-aminoethanethioate + 2-iminoacetate + 1-deoxy-D-xylulose 5-phosphate = [ThiS sulfur-carrier protein]-C-terminal Gly-Gly + 2-[(2R,5Z)-2-carboxy-4-methylthiazol-5(2H)-ylidene]ethyl phosphate + 2 H2O + H(+). The protein operates within cofactor biosynthesis; thiamine diphosphate biosynthesis. In terms of biological role, catalyzes the rearrangement of 1-deoxy-D-xylulose 5-phosphate (DXP) to produce the thiazole phosphate moiety of thiamine. Sulfur is provided by the thiocarboxylate moiety of the carrier protein ThiS. In vitro, sulfur can be provided by H(2)S. This is Thiazole synthase from Gracilaria tenuistipitata var. liui (Red alga).